The sequence spans 79 residues: Defensin-like protein 54 (79 aa).

An N-terminal signal peptide occupies residues 1 to 27 (MGIKKTSATVFLVIILTISFSYYDVEA). Cystine bridges form between Cys39-Cys76, Cys43-Cys67, Cys52-Cys74, and Cys56-Cys75.

Belongs to the DEFL family.

Its subcellular location is the secreted. This Arabidopsis thaliana (Mouse-ear cress) protein is Defensin-like protein 54.